Here is a 31-residue protein sequence, read N- to C-terminus: Protamine-1B (31 aa).

Positions 1-31 are disordered; sequence MPRRRRASRRIRRRRRPRVSRRRRRGGRRRR.

Testis.

The protein resides in the nucleus. The protein localises to the chromosome. Functionally, protamines substitute for histones in the chromatin of sperm during the haploid phase of spermatogenesis. They compact sperm DNA into a highly condensed, stable and inactive complex. This is Protamine-1B from Oncorhynchus mykiss (Rainbow trout).